The sequence spans 77 residues: U8-lycotoxin-Ls1t (77 aa).

An N-terminal signal peptide occupies residues 1 to 20 (MKLIIFTGLVPFAIVSLIEA). The propeptide occupies 21-26 (QAENEK).

It belongs to the neurotoxin 19 (CSTX) family. 08 (U8-Lctx) subfamily. Contains 4 disulfide bonds. Expressed by the venom gland.

The protein resides in the secreted. In Lycosa singoriensis (Wolf spider), this protein is U8-lycotoxin-Ls1t.